We begin with the raw amino-acid sequence, 289 residues long: MASDLAMSAELPNSPLAIEYVNDFDLMKFEVKKEPPEAERFCHRLPPGSLSSTPISTPCSSVPSSPSFCAPSPGAQSGVNPSNPNAANKPQLEDLYWMSNYQHHINPEALNLTPEDAVEALIGNPHHHHHHHQGYDGFRGQQYPGDEMAPSGHHHQVHHHHHHHNHHLRLEDRFSDEQLVSMSVRELNRQLRGFSKEEVIRLKQKRRTLKNRGYAQSCRYKRVQQRHILETEKCQLQSQVEQLKQEVSRLAKERDLYKDKYEKLASRSFTTRESPPQGNPGKANADFFM.

Over residues 52–73 (STPISTPCSSVPSSPSFCAPSP) the composition is skewed to low complexity. Disordered stretches follow at residues 52–87 (STPI…PNAA) and 126–164 (HHHH…HHHH). Over residues 74-87 (GAQSGVNPSNPNAA) the composition is skewed to polar residues. The segment covering 152 to 164 (GHHHQVHHHHHHH) has biased composition (basic residues). The segment at 201–226 (RLKQKRRTLKNRGYAQSCRYKRVQQR) is basic motif. Positions 201–264 (RLKQKRRTLK…DLYKDKYEKL (64 aa)) constitute a bZIP domain. Residues 229–250 (LETEKCQLQSQVEQLKQEVSRL) form a leucine-zipper region. A disordered region spans residues 266 to 289 (SRSFTTRESPPQGNPGKANADFFM). The segment covering 267–276 (RSFTTRESPP) has biased composition (polar residues).

The protein belongs to the bZIP family. Maf subfamily.

The protein resides in the nucleus. Transcription factor, possibly involved in transcription regulation during lens development. The polypeptide is Transcription factor MafA (mafa) (Xenopus tropicalis (Western clawed frog)).